The primary structure comprises 1252 residues: Guanine nucleotide exchange factor SDC25 (1252 aa).

The 72-residue stretch at 26–97 (QPIDVVECTY…PPSFTRSILN (72 aa)) folds into the SH3 domain. Disordered stretches follow at residues 409 to 454 (IPAS…DTIW) and 623 to 648 (LNLD…DEYE). Positions 416–428 (TSCSSETSHHSPS) are enriched in low complexity. In terms of domain architecture, N-terminal Ras-GEF spans 782–914 (SNNRIKGGSK…LLKEVNQKFK (133 aa)). A Ras-GEF domain is found at 952-1199 (DPVLFATQLT…YQLSLIIEPK (248 aa)). A disordered region spans residues 1201–1252 (RKKVVPNSNSNNKSQEKSRDDQTDEGKTSTKKDRFSKFQLHKTKKKAPKVSK). The segment covering 1214 to 1236 (SQEKSRDDQTDEGKTSTKKDRFS) has biased composition (basic and acidic residues). A compositionally biased stretch (basic residues) spans 1239–1252 (QLHKTKKKAPKVSK).

Functionally, promotes the exchange of Ras-bound GDP by GTP. In Saccharomyces cerevisiae (strain YJM789) (Baker's yeast), this protein is Guanine nucleotide exchange factor SDC25 (SDC25).